Consider the following 269-residue polypeptide: Lysyl endopeptidase (269 aa).

3 cysteine pairs are disulfide-bonded: Cys6–Cys216, Cys12–Cys80, and Cys36–Cys58. Residues His57, Asp113, and Ser194 each act as charge relay system in the active site.

This sequence belongs to the peptidase S1 family.

It localises to the secreted. It catalyses the reaction Preferential cleavage: Lys-|-Xaa, including Lys-|-Pro.. In terms of biological role, highly specific endopeptidase that hydrolyzes lysyl bonds including the Lys-Pro bond. The protein is Lysyl endopeptidase of Lysobacter enzymogenes.